A 223-amino-acid polypeptide reads, in one-letter code: ATP phosphoribosyltransferase (223 aa).

The protein belongs to the ATP phosphoribosyltransferase family. Short subfamily. In terms of assembly, heteromultimer composed of HisG and HisZ subunits.

The protein localises to the cytoplasm. The enzyme catalyses 1-(5-phospho-beta-D-ribosyl)-ATP + diphosphate = 5-phospho-alpha-D-ribose 1-diphosphate + ATP. The protein operates within amino-acid biosynthesis; L-histidine biosynthesis; L-histidine from 5-phospho-alpha-D-ribose 1-diphosphate: step 1/9. Its function is as follows. Catalyzes the condensation of ATP and 5-phosphoribose 1-diphosphate to form N'-(5'-phosphoribosyl)-ATP (PR-ATP). Has a crucial role in the pathway because the rate of histidine biosynthesis seems to be controlled primarily by regulation of HisG enzymatic activity. The polypeptide is ATP phosphoribosyltransferase (Bordetella pertussis (strain Tohama I / ATCC BAA-589 / NCTC 13251)).